A 600-amino-acid polypeptide reads, in one-letter code: DNA ligase (600 aa).

Asp-259 lines the ATP pocket. The active-site N6-AMP-lysine intermediate is Lys-261. ATP contacts are provided by Arg-266, Arg-281, Glu-311, Phe-351, Arg-428, and Lys-434.

The protein belongs to the ATP-dependent DNA ligase family. Mg(2+) is required as a cofactor.

It catalyses the reaction ATP + (deoxyribonucleotide)n-3'-hydroxyl + 5'-phospho-(deoxyribonucleotide)m = (deoxyribonucleotide)n+m + AMP + diphosphate.. Functionally, DNA ligase that seals nicks in double-stranded DNA during DNA replication, DNA recombination and DNA repair. The polypeptide is DNA ligase (Acidianus ambivalens (Desulfurolobus ambivalens)).